A 722-amino-acid polypeptide reads, in one-letter code: Disintegrin and metalloproteinase domain-containing protein 21 (722 aa).

Positions 1-31 (MAVDGTLVYIRVTLLLLWLGVFLSISGYCQA) are cleaved as a signal peptide. A propeptide spanning residues 32-196 (GPSQHFTSPE…FEEAENSALE (165 aa)) is cleaved from the precursor. An N-linked (GlcNAc...) asparagine glycan is attached at Asn164. The Cysteine switch signature appears at 171–178 (MRCGLTEK). Cys173 is a Zn(2+) binding site. The Extracellular segment spans residues 197–681 (PKSAGDWWTH…DSGPASAKRG (485 aa)). In terms of domain architecture, Peptidase M12B spans 208 to 398 (WFLELVVVVN…NQGSCLHNPP (191 aa)). Asn227 carries N-linked (GlcNAc...) asparagine glycosylation. Disulfide bonds link Cys316–Cys393, Cys356–Cys378, and Cys358–Cys363. A Zn(2+)-binding site is contributed by His341. Residue Glu342 is part of the active site. 2 residues coordinate Zn(2+): His345 and His351. N-linked (GlcNAc...) asparagine glycans are attached at residues Asn377, Asn437, Asn478, Asn546, and Asn600. The 87-residue stretch at 406–492 (LKRCGNGVVE…QCPEDRYVQD (87 aa)) folds into the Disintegrin domain. Cys464 and Cys484 are disulfide-bonded. 3 disulfides stabilise this stretch: Cys634/Cys645, Cys639/Cys651, and Cys653/Cys662. The 30-residue stretch at 634–663 (CLPETCNMKGICNNKHHCHCGYGWSPPYCQ) folds into the EGF-like domain. Residues 682 to 702 (VFLPLIVIPSLSVLTFLFTVG) form a helical membrane-spanning segment. Over 703 to 722 (LLMYLRQCSGPKETKAHSSG) the chain is Cytoplasmic.

It depends on Zn(2+) as a cofactor. Post-translationally, has no obvious cleavage site for furin endopeptidase, suggesting that the proteolytic processing is regulated.

The protein resides in the membrane. In terms of biological role, may be involved in sperm maturation and/or fertilization. May also be involved in epithelia functions associated with establishing and maintaining gradients of ions or nutrients. The sequence is that of Disintegrin and metalloproteinase domain-containing protein 21 (ADAM21) from Homo sapiens (Human).